The sequence spans 338 residues: Diacylglycerol acyltransferase/mycolyltransferase Ag85A (338 aa).

Residues 1–42 form the signal peptide; that stretch reads MQLVDRVRGAVTGMSRRLVVGAVGAALVSGLVGAVGGTATAG. Residue 85-86 participates in substrate binding; the sequence is LR. The interval 101–111 is fibronectin-binding; the sequence is FEWYDQSGLSV. Cys-130 and Cys-135 form a disulfide bridge. Substrate-binding residues include Ser-169 and Asp-197. Residue Ser-169 is the Nucleophile of the active site. Glu-273 is a catalytic residue. Residues 275–278, Lys-282, and 305–307 each bind substrate; these read FVRT and HSW. His-305 is a catalytic residue.

This sequence belongs to the mycobacterial A85 antigen family. In terms of assembly, homodimer.

It localises to the secreted. The protein resides in the cell wall. It is found in the cytoplasm. The enzyme catalyses an acyl-CoA + a 1,2-diacyl-sn-glycerol = a triacyl-sn-glycerol + CoA. The catalysed reaction is 2 alpha,alpha'-trehalose 6-mycolate = alpha,alpha'-trehalose 6,6'-bismycolate + alpha,alpha-trehalose. The antigen 85 proteins (FbpA, FbpB, FbpC) are responsible for the high affinity of mycobacteria for fibronectin, a large adhesive glycoprotein, which facilitates the attachment of M.tuberculosis to murine alveolar macrophages (AMs). They also help to maintain the integrity of the cell wall by catalyzing the transfer of mycolic acids to cell wall arabinogalactan, and through the synthesis of alpha,alpha-trehalose dimycolate (TDM, cord factor). They catalyze the transfer of a mycoloyl residue from one molecule of alpha,alpha-trehalose monomycolate (TMM) to another TMM, leading to the formation of TDM. FbpA mediates triacylglycerol (TAG) formation with long-chain acyl-CoA as the acyl donor and 1,2-dipalmitoyl-sn-glycerol (1,2-dipalmitin) as the acyl acceptor. It has a preference for C26:0-CoA over C18:1-CoA. The polypeptide is Diacylglycerol acyltransferase/mycolyltransferase Ag85A (fbpA) (Mycobacterium bovis (strain ATCC BAA-935 / AF2122/97)).